Here is a 164-residue protein sequence, read N- to C-terminus: Lipoprotein signal peptidase (164 aa).

The next 4 membrane-spanning stretches (helical) occupy residues I8–V28, V39–Q59, V64–M84, and L91–F111. Residues D118 and D140 contribute to the active site. The chain crosses the membrane as a helical span at residues Y131–L151.

The protein belongs to the peptidase A8 family.

It is found in the cell inner membrane. It catalyses the reaction Release of signal peptides from bacterial membrane prolipoproteins. Hydrolyzes -Xaa-Yaa-Zaa-|-(S,diacylglyceryl)Cys-, in which Xaa is hydrophobic (preferably Leu), and Yaa (Ala or Ser) and Zaa (Gly or Ala) have small, neutral side chains.. The protein operates within protein modification; lipoprotein biosynthesis (signal peptide cleavage). Functionally, this protein specifically catalyzes the removal of signal peptides from prolipoproteins. This chain is Lipoprotein signal peptidase, found in Nitrobacter hamburgensis (strain DSM 10229 / NCIMB 13809 / X14).